A 169-amino-acid polypeptide reads, in one-letter code: NADH dehydrogenase [ubiquinone] 1 alpha subcomplex assembly factor 2 (169 aa).

Residues 116 to 169 (TSEELLPPPVQTQIKGHASAPYFGKEEPSVAPSSTGKTFQPGSWMPRDGKSHNQ) are disordered. Serine 134 bears the Phosphoserine mark. Positions 146 to 156 (APSSTGKTFQP) are enriched in polar residues.

Belongs to the complex I NDUFA12 subunit family. Interacts with ARMC9. Highly expressed in ESCC cells. Also expressed in heart, skeletal muscle, liver, and in fibroblasts.

Its subcellular location is the mitochondrion. Its function is as follows. Acts as a molecular chaperone for mitochondrial complex I assembly. Complex I functions in the transfer of electrons from NADH to the respiratory chain. The immediate electron acceptor for the enzyme is believed to be ubiquinone. Is involved in the initial steps of cilia formation, including removal of CP110 from the mother centrioles, docking of membrane vesicles to the mother centrioles, and establishment of the transition zone. The sequence is that of NADH dehydrogenase [ubiquinone] 1 alpha subcomplex assembly factor 2 (NDUFAF2) from Homo sapiens (Human).